Here is a 200-residue protein sequence, read N- to C-terminus: Protein GrpE (200 aa).

Residues 15-47 (DLEMDLNEEELEESEVNEDKEFEELDKSEEENE) form a disordered region. The segment covering 16–47 (LEMDLNEEELEESEVNEDKEFEELDKSEEENE) has biased composition (acidic residues).

Belongs to the GrpE family. Homodimer.

Its subcellular location is the cytoplasm. In terms of biological role, participates actively in the response to hyperosmotic and heat shock by preventing the aggregation of stress-denatured proteins, in association with DnaK and GrpE. It is the nucleotide exchange factor for DnaK and may function as a thermosensor. Unfolded proteins bind initially to DnaJ; upon interaction with the DnaJ-bound protein, DnaK hydrolyzes its bound ATP, resulting in the formation of a stable complex. GrpE releases ADP from DnaK; ATP binding to DnaK triggers the release of the substrate protein, thus completing the reaction cycle. Several rounds of ATP-dependent interactions between DnaJ, DnaK and GrpE are required for fully efficient folding. The chain is Protein GrpE from Clostridium tetani (strain Massachusetts / E88).